The following is a 239-amino-acid chain: Myogenic factor 6 (239 aa).

A disordered region spans residues 27-64; sequence QHLDMPGVSPLYDGNHSPLSPGPDNVPSETGGESSGDE. Positions 96–147 constitute a bHLH domain; sequence DRRKAATLRERRRLKKINEAFDALKRKSVANPNQRLPKVEILRSAISYIERL. A disordered region spans residues 155–184; sequence DEQERGQSGASDTRNDKEQNRPSGGDYCWK.

As to quaternary structure, efficient DNA binding requires dimerization with another bHLH protein.

It localises to the nucleus. Its function is as follows. Involved in muscle differentiation (myogenic factor). Induces fibroblasts to differentiate into myoblasts. Probable sequence specific DNA-binding protein. The sequence is that of Myogenic factor 6 (myf6) from Tetraodon nigroviridis (Spotted green pufferfish).